We begin with the raw amino-acid sequence, 233 residues long: Bcl-2-like protein 1 (233 aa).

The BH4 motif lies at 4 to 24 (SNRELVVDFLSYKLSQKGYSW). The tract at residues 28 to 71 (SDVEENRTEAPEGTESEMETPSAINGNPSWHLADSPAVNGATGH) is disordered. The residue at position 49 (Ser49) is a Phosphoserine; by PLK3. Ser62 carries the post-translational modification Phosphoserine; by CDK1. The short motif at 86 to 100 (VKQALREAGDEFELR) is the BH3 element. Positions 129-148 (ELFRDGVNWGRIVAFFSFGG) match the BH1 motif. Residues 180–195 (PWIQENGGWDTFVELY) carry the BH2 motif. Residues 210–226 (FNRWFLTGMTVAGVVLL) traverse the membrane as a helical segment.

This sequence belongs to the Bcl-2 family. Homodimer. Interacts with BCL2L11. Interacts with BAD. Interacts with PGAM5. Interacts with HEBP2. Interacts with p53/TP53 and BBC3; interaction with BBC3 disrupts the interaction with p53/TP53. Interacts with ATP5F1A and ATP5F1B; the interactions mediate the association of isoform Bcl-X(L) with the mitochondrial membrane ATP synthase F(1)F(0) ATP synthase. Interacts with VDAC1. Interacts with BCL2L11 (via BH3). Interacts with RNF183. Interacts with GIMAP3/IAN4 and GIMAP5/IAN5. Interacts with GIMAP5 and HSPA8/HSC70; the interaction between HSPA8 and BCL2L1 is impaired in the absence of GIMAP5. Interacts with isoform 4 of CLU; this interaction releases and activates BAX and promotes cell death. In terms of assembly, forms heterodimers with BAX, BAK or BCL2; heterodimerization with BAX does not seem to be required for anti-apoptotic activity. Interacts with isoform 1 of SIVA1; the interaction inhibits the anti-apoptotic activity. Interacts with IKZF3. Interacts with RTL10/BOP. Interacts with DNM1L and CLTA; DNM1L and BCL2L1 isoform BCL-X(L) may form a complex in synaptic vesicles that also contains clathrin and MFF. Interacts (via the loop between motifs BH4 and BH3) with NLRP1 (via LRR repeats), but not with NLRP2, NLRP3, NLRP4, PYCARD, nor MEFV. Interacts with BECN1. Proteolytically cleaved by caspases during apoptosis. The cleaved protein, lacking the BH4 motif, has pro-apoptotic activity. In terms of processing, phosphorylated on Ser-62 by CDK1. This phosphorylation is partial in normal mitotic cells, but complete in G2-arrested cells upon DNA-damage, thus promoting subsequent apoptosis probably by triggering caspases-mediated proteolysis. Phosphorylated by PLK3, leading to regulate the G2 checkpoint and progression to cytokinesis during mitosis. Phosphorylation at Ser-49 appears during the S phase and G2, disappears rapidly in early mitosis during prometaphase, metaphase and early anaphase, and re-appears during telophase and cytokinesis. Post-translationally, ubiquitinated by RNF183 during prolonged ER stress, leading to degradation by the proteosome. Bcl-X(S) is expressed at high levels in cells that undergo a high rate of turnover, such as developing lymphocytes. In contrast, Bcl-X(L) is found in tissues containing long-lived postmitotic cells, such as adult brain.

The protein localises to the mitochondrion inner membrane. Its subcellular location is the mitochondrion outer membrane. The protein resides in the mitochondrion matrix. It localises to the cytoplasmic vesicle. It is found in the secretory vesicle. The protein localises to the synaptic vesicle membrane. Its subcellular location is the cytoplasm. The protein resides in the cytosol. It localises to the cytoskeleton. It is found in the microtubule organizing center. The protein localises to the centrosome. Its subcellular location is the nucleus membrane. Potent inhibitor of cell death. Inhibits activation of caspases. Appears to regulate cell death by blocking the voltage-dependent anion channel (VDAC) by binding to it and preventing the release of the caspase activator, CYC1, from the mitochondrial membrane. Also acts as a regulator of G2 checkpoint and progression to cytokinesis during mitosis. Functionally, isoform Bcl-X(L) also regulates presynaptic plasticity, including neurotransmitter release and recovery, number of axonal mitochondria as well as size and number of synaptic vesicle clusters. During synaptic stimulation, increases ATP availability from mitochondria through regulation of mitochondrial membrane ATP synthase F(1)F(0) activity and regulates endocytic vesicle retrieval in hippocampal neurons through association with DMN1L and stimulation of its GTPase activity in synaptic vesicles. May attenuate inflammation impairing NLRP1-inflammasome activation, hence CASP1 activation and IL1B release. In terms of biological role, isoform Bcl-X(S) promotes apoptosis. The chain is Bcl-2-like protein 1 (BCL2L1) from Homo sapiens (Human).